The sequence spans 236 residues: 2-C-methyl-D-erythritol 4-phosphate cytidylyltransferase (236 aa).

The protein belongs to the IspD/TarI cytidylyltransferase family. IspD subfamily. In terms of assembly, homodimer.

It catalyses the reaction 2-C-methyl-D-erythritol 4-phosphate + CTP + H(+) = 4-CDP-2-C-methyl-D-erythritol + diphosphate. It participates in isoprenoid biosynthesis; isopentenyl diphosphate biosynthesis via DXP pathway; isopentenyl diphosphate from 1-deoxy-D-xylulose 5-phosphate: step 2/6. Catalyzes the formation of 4-diphosphocytidyl-2-C-methyl-D-erythritol from CTP and 2-C-methyl-D-erythritol 4-phosphate (MEP). The protein is 2-C-methyl-D-erythritol 4-phosphate cytidylyltransferase of Salmonella paratyphi C (strain RKS4594).